The sequence spans 100 residues: uncharacterized protein (100 aa).

The span at 68-91 shows a compositional bias: basic and acidic residues; it reads EQYASGAGEKRKEQSSGNSRRKDP. Residues 68 to 100 are disordered; the sequence is EQYASGAGEKRKEQSSGNSRRKDPSLYNWSDVK.

Belongs to the chlamydial CPn_0121/CT_031/TC_0300 family.

This is an uncharacterized protein from Chlamydia muridarum (strain MoPn / Nigg).